Here is a 524-residue protein sequence, read N- to C-terminus: Excitatory amino acid transporter 3 (524 aa).

At 1 to 18 (MGKPARKGCDSKRFLKNN) the chain is on the cytoplasmic side. Residues 19–38 (WLLLSTVVAVVLGIVIGVLV) traverse the membrane as a helical segment. Residues 39–61 (REYSNLSTLDKFYFAFPGEILMR) are Extracellular-facing. A glycan (N-linked (GlcNAc...) asparagine) is linked at N43. A helical membrane pass occupies residues 62–82 (MLKLVILPLIVSSMITGVAAL). The Cytoplasmic segment spans residues 83–93 (DSNVSGKIGLR). Residues 94–114 (AVLYYFCTTIIAVILGIVLVV) form a helical membrane-spanning segment. 3 residues coordinate Na(+): Y98, T101, and T102. At 115 to 205 (SIKPGVTQKV…RTKEYRVVGL (91 aa)) the chain is on the extracellular side. Residues N178 and N195 are each glycosylated (N-linked (GlcNAc...) asparagine). Residues 206–229 (YSDGINVLGLIVFCLVFGLVIGKM) form a helical membrane-spanning segment. Topologically, residues 230–238 (GEKGQILVD) are cytoplasmic. Residues 239–266 (FFNALSDATMKIVQIIMCYMPLGILFLI) traverse the membrane as a helical segment. The Extracellular segment spans residues 267–286 (AGKIIEVEDWEIFRKLGLYM). The chain crosses the membrane as a helical span at residues 287 to 308 (VTVLSGLAIHSIVILPLIYFIV). The Cytoplasmic portion of the chain corresponds to 309 to 313 (VRKNP). The discontinuously helical intramembrane region spans 314–344 (FRFAMGMTQALLTALMISSSSATLPVTFRCA). L-aspartate-binding residues include S331 and S333. The Cytoplasmic portion of the chain corresponds to 345 to 353 (EEKNRVDKR). Residues 354–380 (ITRFVLPVGATINMDGTALYEAVAAVF) form a helical membrane-spanning segment. 4 residues coordinate Na(+): G362, T364, N366, and D368. T370 is an L-aspartate binding site. The Extracellular portion of the chain corresponds to 381-393 (IAQLNDMDLSIGQ). An intramembrane region (discontinuously helical) is located at residues 394–427 (IITISVTATAASIGAAGVPQAGLVTMVIVLSAVG). 3 residues coordinate Na(+): S405, I406, and A408. V411 contacts L-aspartate. Residues 428-440 (LPAEDVTLIIAVD) lie on the Extracellular side of the membrane. A helical membrane pass occupies residues 441 to 462 (WLLDRFRTVVNVLGDAFGTGIV). L-aspartate is bound by residues R447, T448, and N451. The Na(+) site is built by N451 and D455. At 463–524 (EKLSKKELEQ…TISFTQTSQF (62 aa)) the chain is on the cytoplasmic side. S517 and S522 each carry phosphoserine.

The protein belongs to the dicarboxylate/amino acid:cation symporter (DAACS) (TC 2.A.23) family. SLC1A1 subfamily. As to quaternary structure, homotrimer. Interacts with ARL6IP5. Interacts with RTN2 (via N-terminus); the interaction promotes cell surface expression of SLC1A1. Interacts with SORCS2; this interaction is important for normal expression at the cell membrane. Brain, but also small intestine, kidney, liver and heart.

It is found in the cell membrane. The protein localises to the apical cell membrane. The protein resides in the synapse. It localises to the synaptosome. Its subcellular location is the early endosome membrane. It is found in the late endosome membrane. The protein localises to the recycling endosome membrane. The catalysed reaction is K(+)(in) + L-glutamate(out) + 3 Na(+)(out) + H(+)(out) = K(+)(out) + L-glutamate(in) + 3 Na(+)(in) + H(+)(in). The enzyme catalyses K(+)(in) + L-aspartate(out) + 3 Na(+)(out) + H(+)(out) = K(+)(out) + L-aspartate(in) + 3 Na(+)(in) + H(+)(in). It catalyses the reaction D-aspartate(out) + K(+)(in) + 3 Na(+)(out) + H(+)(out) = D-aspartate(in) + K(+)(out) + 3 Na(+)(in) + H(+)(in). It carries out the reaction K(+)(in) + L-cysteine(out) + 3 Na(+)(out) + H(+)(out) = K(+)(out) + L-cysteine(in) + 3 Na(+)(in) + H(+)(in). Functionally, sodium-dependent, high-affinity amino acid transporter that mediates the uptake of L-glutamate and also L-aspartate and D-aspartate. Can also transport L-cysteine. Functions as a symporter that transports one amino acid molecule together with two or three Na(+) ions and one proton, in parallel with the counter-transport of one K(+) ion. Mediates Cl(-) flux that is not coupled to amino acid transport; this avoids the accumulation of negative charges due to aspartate and Na(+) symport. Plays an important role in L-glutamate and L-aspartate reabsorption in renal tubuli. Plays a redundant role in the rapid removal of released glutamate from the synaptic cleft, which is essential for terminating the postsynaptic action of glutamate. Contributes to glutathione biosynthesis and protection against oxidative stress via its role in L-glutamate and L-cysteine transport. Negatively regulated by ARL6IP5. This is Excitatory amino acid transporter 3 (SLC1A1) from Oryctolagus cuniculus (Rabbit).